The following is a 520-amino-acid chain: Putative cytochrome P450 CYP13A4 (520 aa).

C464 contacts heme.

The protein belongs to the cytochrome P450 family. The cofactor is heme.

Cytochromes P450 are a group of heme-thiolate monooxygenases. They oxidize a variety of structurally unrelated compounds, including steroids, fatty acids, and xenobiotics. The protein is Putative cytochrome P450 CYP13A4 (cyp-13A4) of Caenorhabditis elegans.